A 126-amino-acid chain; its full sequence is Antimicrobial protein 1 (126 aa).

The signal sequence occupies residues 1-24 (MRSSLLLGLTVVLLLGVTVPPCMA).

In terms of tissue distribution, strongly expressed in gills, hemocytes and reproductive tract, with weaker expression in muscle, heart and digestive tract. Not detected in eyes and hepatopancreas (at protein level).

It is found in the secreted. In terms of biological role, has antibacterial activity against the Gram-positive bacteria E.coli (MIC&lt;50 ug/ml) and P.aeruginosa (MIC&lt;25 ug/ml), and the Gram-negative bacteria S.aureus (MIC&lt;100 ug/ml) and S.pyogenes (MIC&lt;50 ug/ml). The chain is Antimicrobial protein 1 from Scylla serrata (Mud crab).